The following is a 203-amino-acid chain: Large ribosomal subunit protein bL25 (203 aa).

This sequence belongs to the bacterial ribosomal protein bL25 family. CTC subfamily. In terms of assembly, part of the 50S ribosomal subunit; part of the 5S rRNA/L5/L18/L25 subcomplex. Contacts the 5S rRNA. Binds to the 5S rRNA independently of L5 and L18.

In terms of biological role, this is one of the proteins that binds to the 5S RNA in the ribosome where it forms part of the central protuberance. The polypeptide is Large ribosomal subunit protein bL25 (Wolbachia pipientis wMel).